The primary structure comprises 153 residues: Large ribosomal subunit protein uL22 (153 aa).

The protein belongs to the universal ribosomal protein uL22 family. As to quaternary structure, part of the 50S ribosomal subunit.

Its function is as follows. This protein binds specifically to 23S rRNA. It makes multiple contacts with different domains of the 23S rRNA in the assembled 50S subunit and ribosome. The globular domain of the protein is located near the polypeptide exit tunnel on the outside of the subunit, while an extended beta-hairpin is found that lines the wall of the exit tunnel in the center of the 70S ribosome. The polypeptide is Large ribosomal subunit protein uL22 (Methanococcus vannielii (strain ATCC 35089 / DSM 1224 / JCM 13029 / OCM 148 / SB)).